The sequence spans 159 residues: Endoribonuclease YbeY (159 aa).

Histidine 125, histidine 129, and histidine 135 together coordinate Zn(2+).

Belongs to the endoribonuclease YbeY family. The cofactor is Zn(2+).

Its subcellular location is the cytoplasm. Functionally, single strand-specific metallo-endoribonuclease involved in late-stage 70S ribosome quality control and in maturation of the 3' terminus of the 16S rRNA. The polypeptide is Endoribonuclease YbeY (Brevibacillus brevis (strain 47 / JCM 6285 / NBRC 100599)).